Consider the following 300-residue polypeptide: 4-hydroxy-tetrahydrodipicolinate synthase (300 aa).

T45 is a binding site for pyruvate. The active-site Proton donor/acceptor is the Y140. Catalysis depends on K169, which acts as the Schiff-base intermediate with substrate. I210 is a pyruvate binding site.

This sequence belongs to the DapA family. As to quaternary structure, homotetramer; dimer of dimers.

The protein localises to the cytoplasm. The catalysed reaction is L-aspartate 4-semialdehyde + pyruvate = (2S,4S)-4-hydroxy-2,3,4,5-tetrahydrodipicolinate + H2O + H(+). The protein operates within amino-acid biosynthesis; L-lysine biosynthesis via DAP pathway; (S)-tetrahydrodipicolinate from L-aspartate: step 3/4. Its function is as follows. Catalyzes the condensation of (S)-aspartate-beta-semialdehyde [(S)-ASA] and pyruvate to 4-hydroxy-tetrahydrodipicolinate (HTPA). The chain is 4-hydroxy-tetrahydrodipicolinate synthase from Helicobacter pylori (strain HPAG1).